The primary structure comprises 102 residues: Large ribosomal subunit protein bL21 (102 aa).

It belongs to the bacterial ribosomal protein bL21 family. As to quaternary structure, part of the 50S ribosomal subunit. Contacts protein L20.

This protein binds to 23S rRNA in the presence of protein L20. The protein is Large ribosomal subunit protein bL21 of Bifidobacterium animalis subsp. lactis (strain AD011).